We begin with the raw amino-acid sequence, 387 residues long: F-box only protein 4 (387 aa).

Residues Ser11, Ser12, and Ser48 each carry the phosphoserine modification. In terms of domain architecture, F-box spans 56-102 (ASSLTRLPIDVQLYILSFLSPHDLCQLGSTSRYWNETVRDPILWRYF).

In terms of assembly, homodimer. Part of the SCF (SKP1-CUL1-F-box) E3 ubiquitin-protein ligase complex SCF(FBXO4) formed of CUL1, SKP1, RBX1 and FBXO4. Interacts with TERF1; this interaction is prevented in the presence of GNL3L. Identified in a complex with CRYAB and CCND1. Post-translationally, phosphorylation at Ser-11 varies during the cell cycle. It is low in resting cells and high in the S phase and the G2/M phase of the cell cycle. Phosphorylation is decreased during late G1 phase. Phosphorylation at Ser-11 promotes homodimerization and is necessary for optimal ubiquitin ligase activity towards CCND1.

It localises to the cytoplasm. It functions in the pathway protein modification; protein ubiquitination. Substrate recognition component of a SCF (SKP1-CUL1-F-box protein) E3 ubiquitin-protein ligase complex that mediates the ubiquitination and subsequent proteasomal degradation of target proteins. Promotes ubiquitination of cyclin-D1 (CCND1) and its subsequent proteasomal degradation. However, it does not act as a major regulator of CCND1 stability during the G1/S transition. Recognizes TERF1 and promotes its ubiquitination together with UBE2D1. Promotes ubiquitination of FXR1 following phosphorylation of FXR1 by GSK3B, leading to FXR1 degradation by the proteasome. The polypeptide is F-box only protein 4 (FBXO4) (Bos taurus (Bovine)).